The primary structure comprises 512 residues: Cytochrome P450 72A13 (512 aa).

The helical transmembrane segment at 2–22 threads the bilayer; that stretch reads EISVASVTVSVAVVVVSWWVW. A heme-binding site is contributed by Cys-460.

The protein belongs to the cytochrome P450 family. Heme is required as a cofactor.

The protein resides in the membrane. The chain is Cytochrome P450 72A13 (CYP72A13) from Arabidopsis thaliana (Mouse-ear cress).